A 185-amino-acid polypeptide reads, in one-letter code: Probable RNA 2'-phosphotransferase (185 aa).

It belongs to the KptA/TPT1 family.

Its function is as follows. Removes the 2'-phosphate from RNA via an intermediate in which the phosphate is ADP-ribosylated by NAD followed by a presumed transesterification to release the RNA and generate ADP-ribose 1''-2''-cyclic phosphate (APPR&gt;P). May function as an ADP-ribosylase. The protein is Probable RNA 2'-phosphotransferase of Rhizobium rhizogenes (strain K84 / ATCC BAA-868) (Agrobacterium radiobacter).